Reading from the N-terminus, the 268-residue chain is Imidazole glycerol phosphate synthase subunit HisF (268 aa).

Residues Asp12 and Asp131 contribute to the active site.

This sequence belongs to the HisA/HisF family. As to quaternary structure, heterodimer of HisH and HisF.

It is found in the cytoplasm. The catalysed reaction is 5-[(5-phospho-1-deoxy-D-ribulos-1-ylimino)methylamino]-1-(5-phospho-beta-D-ribosyl)imidazole-4-carboxamide + L-glutamine = D-erythro-1-(imidazol-4-yl)glycerol 3-phosphate + 5-amino-1-(5-phospho-beta-D-ribosyl)imidazole-4-carboxamide + L-glutamate + H(+). It participates in amino-acid biosynthesis; L-histidine biosynthesis; L-histidine from 5-phospho-alpha-D-ribose 1-diphosphate: step 5/9. Its function is as follows. IGPS catalyzes the conversion of PRFAR and glutamine to IGP, AICAR and glutamate. The HisF subunit catalyzes the cyclization activity that produces IGP and AICAR from PRFAR using the ammonia provided by the HisH subunit. The chain is Imidazole glycerol phosphate synthase subunit HisF from Methanoculleus marisnigri (strain ATCC 35101 / DSM 1498 / JR1).